The primary structure comprises 160 residues: Phosphopantetheine adenylyltransferase (160 aa).

S10 lines the substrate pocket. Residues 10–11 (SF) and H18 contribute to the ATP site. 3 residues coordinate substrate: K42, T74, and R88. ATP contacts are provided by residues 89–91 (GLR), E99, and 124–130 (FYYISSR).

This sequence belongs to the bacterial CoaD family. Homohexamer. Requires Mg(2+) as cofactor.

Its subcellular location is the cytoplasm. It catalyses the reaction (R)-4'-phosphopantetheine + ATP + H(+) = 3'-dephospho-CoA + diphosphate. It functions in the pathway cofactor biosynthesis; coenzyme A biosynthesis; CoA from (R)-pantothenate: step 4/5. Its function is as follows. Reversibly transfers an adenylyl group from ATP to 4'-phosphopantetheine, yielding dephospho-CoA (dPCoA) and pyrophosphate. The sequence is that of Phosphopantetheine adenylyltransferase from Bdellovibrio bacteriovorus (strain ATCC 15356 / DSM 50701 / NCIMB 9529 / HD100).